Here is a 114-residue protein sequence, read N- to C-terminus: MRTSSLVLFAAVAVFGAACTAAAGDESWKTIDANDRHVQDVALWAVAETDWASATGGLTLNTVDGAEKRFEAGVNYYRLTLEASSRVVAKYLRFQAVVYEEGDEHKLVSFVPIH.

The first 23 residues, 1–23 (MRTSSLVLFAAVAVFGAACTAAA), serve as a signal peptide directing secretion.

It belongs to the cystatin family. Phytocystatin subfamily.

The protein localises to the secreted. Functionally, specific inhibitor of cysteine proteinases. Probably involved in the regulation of endogenous processes and in defense against pests and pathogens. The chain is Putative cysteine proteinase inhibitor 9 from Oryza sativa subsp. japonica (Rice).